The primary structure comprises 793 residues: Toll-like receptor 6 (793 aa).

The first 23 residues, 1–23 (MIKDKESPIRSCHFVYIVALVFG), serve as a signal peptide directing secretion. The Extracellular segment spans residues 24 to 584 (TIIQFSDESE…FQVSELSCNT (561 aa)). LRR repeat units lie at residues 54–77 (TKVL…FLSG), 78–101 (LRVL…FNHD), 102–122 (LEYL…PITT), 123–147 (TLKH…GNLT), 148–168 (QLNF…LPIA), 169–196 (HLHL…ILNT), 197–219 (KKLH…SANS), 220–250 (LGCL…GGPT), 251–277 (LLNF…WPKP), 278–303 (IEYL…YKTT), 304–330 (LKAL…VFSE), 331–354 (MNIL…EPST), 355–378 (FKFL…TLAR), 379–404 (LETL…DMLS), 405–428 (LETL…SWVG), 429–449 (SIVV…RCLP), 450–473 (PRIK…TGLE), 474–495 (TLQE…GIFS), and 496–519 (SLSI…QSCQ). A glycan (N-linked (GlcNAc...) asparagine) is linked at Asn-63. An intrachain disulfide couples Cys-117 to Cys-140. Residue Asn-145 is glycosylated (N-linked (GlcNAc...) asparagine). An intrachain disulfide couples Cys-235 to Cys-265. N-linked (GlcNAc...) asparagine glycosylation is found at Asn-253 and Asn-285. A disulfide bridge links Cys-348 with Cys-373. N-linked (GlcNAc...) asparagine glycosylation occurs at Asn-359. Residues Asn-423 and Asn-434 are each glycosylated (N-linked (GlcNAc...) asparagine). Cysteines 424 and 447 form a disulfide. Residues 520–575 (KIRSLKAGNNPFQCSCELRDFIQSVGQVSSDVVEGWPESYKCDYPESYKGTPLKDF) enclose the LRRCT domain. A helical transmembrane segment spans residues 585 to 605 (ALLIITIVVPGLVLAVAVTVL). Residues 606-793 (CIYLDLPWYL…KLMEKAAEIH (188 aa)) lie on the Cytoplasmic side of the membrane. Residues 640–781 (LQFHAFISYS…LFWANLRASI (142 aa)) enclose the TIR domain.

This sequence belongs to the Toll-like receptor family. Homodimer (via cytoplasmic TIR domain). Heterodimer with TLR2 via their respective extracellular domains. Binds MYD88 via their respective TIR domains. Interacts with CD36, following CD36 stimulation by oxLDL or amyloid-beta 42, and forms a heterodimer with TLR4. The trimeric complex is internalized and triggers inflammatory response. LYN kinase activity facilitates TLR4-TLR6 heterodimerization and signal initiation. The heterodimer TLR2:TLR6 interacts with CD14 and CD36 in response to triacylated lipopeptides. Highest expression levels seen in blood and lymph node, intermediate expression seen in spleen and lowest expression seen in the liver, lung and udder cistern.

Its subcellular location is the cell membrane. It is found in the cytoplasmic vesicle. The protein resides in the phagosome membrane. It localises to the membrane raft. The protein localises to the golgi apparatus. In terms of biological role, participates in the innate immune response to Gram-positive bacteria and fungi. Specifically recognizes diacylated and, to a lesser extent, triacylated lipopeptides. In response to diacylated lipopeptides, forms the activation cluster TLR2:TLR6:CD14:CD36, this cluster triggers signaling from the cell surface and subsequently is targeted to the Golgi in a lipid-raft dependent pathway. Acts via MYD88 and TRAF6, leading to NF-kappa-B activation, cytokine secretion and the inflammatory response. Recognizes mycoplasmal macrophage-activating lipopeptide-2kD (MALP-2), soluble tuberculosis factor (STF), phenol-soluble modulin (PSM) and B.burgdorferi outer surface protein A lipoprotein (OspA-L) cooperatively with TLR2. In complex with TLR4, promotes sterile inflammation in monocytes/macrophages in response to oxidized low-density lipoprotein (oxLDL) or amyloid-beta 42. In this context, the initial signal is provided by oxLDL- or amyloid-beta 42-binding to CD36. This event induces the formation of a heterodimer of TLR4 and TLR6, which is rapidly internalized and triggers inflammatory response, leading to the NF-kappa-B-dependent production of CXCL1, CXCL2 and CCL9 cytokines, via MYD88 signaling pathway, and CCL5 cytokine, via TICAM1 signaling pathway, as well as IL1B secretion. This chain is Toll-like receptor 6, found in Bos taurus (Bovine).